A 528-amino-acid chain; its full sequence is Phosphoenolpyruvate carboxykinase (ATP) (528 aa).

Residues Arg-56, Tyr-192, and Lys-198 each contribute to the substrate site. Residues Lys-198, His-217, and 233–241 (GLSGTGKTT) contribute to the ATP site. Residues Lys-198 and His-217 each contribute to the Mn(2+) site. Asp-254 provides a ligand contact to Mn(2+). Residues Glu-282, Arg-319, and Thr-444 each coordinate ATP. A substrate-binding site is contributed by Arg-319.

The protein belongs to the phosphoenolpyruvate carboxykinase (ATP) family. Mn(2+) serves as cofactor.

The protein localises to the cytoplasm. The catalysed reaction is oxaloacetate + ATP = phosphoenolpyruvate + ADP + CO2. It participates in carbohydrate biosynthesis; gluconeogenesis. In terms of biological role, involved in the gluconeogenesis. Catalyzes the conversion of oxaloacetate (OAA) to phosphoenolpyruvate (PEP) through direct phosphoryl transfer between the nucleoside triphosphate and OAA. The chain is Phosphoenolpyruvate carboxykinase (ATP) from Bacillus pumilus (strain SAFR-032).